The following is a 395-amino-acid chain: Multidrug resistance protein MdtL (395 aa).

A run of 12 helical transmembrane segments spans residues 4 to 24 (FLLC…MYLV), 42 to 62 (IAFS…GKIA), 69 to 89 (PVAI…SRAS), 93 to 113 (LFLS…VVAF), 131 to 151 (LLNG…HLIM), 158 to 178 (SLFY…LFIL), 217 to 237 (VSVI…VMGF), 247 to 267 (ALTA…LGLF), 271 to 291 (TLML…SLAH), 295 to 315 (VTLF…GVAM), 328 to 350 (VASS…LAAI), and 355 to 377 (AMNM…IFSV).

This sequence belongs to the major facilitator superfamily. DHA1 family. MdtL (TC 2.A.1.2.22) subfamily.

The protein resides in the cell inner membrane. The sequence is that of Multidrug resistance protein MdtL from Salmonella newport (strain SL254).